The primary structure comprises 119 residues: Large ribosomal subunit protein uL18 (119 aa).

The disordered stretch occupies residues 1–24; it reads MITKQDKNQVRKKRHARVRSKISG. A compositionally biased stretch (basic residues) spans 10-20; sequence VRKKRHARVRS.

It belongs to the universal ribosomal protein uL18 family. In terms of assembly, part of the 50S ribosomal subunit; part of the 5S rRNA/L5/L18/L25 subcomplex. Contacts the 5S and 23S rRNAs.

Functionally, this is one of the proteins that bind and probably mediate the attachment of the 5S RNA into the large ribosomal subunit, where it forms part of the central protuberance. The protein is Large ribosomal subunit protein uL18 of Lysinibacillus sphaericus (strain C3-41).